The following is a 201-amino-acid chain: Small ribosomal subunit protein uS4 (201 aa).

The interval 1 to 42 (MARYTGPVTRKSRRLGTDLVGGDQSFEKRPYPPGQHGRARIK) is disordered. Residues 91–157 (SRLDNVVYRA…VPFQIARETA (67 aa)) form the S4 RNA-binding domain.

It belongs to the universal ribosomal protein uS4 family. In terms of assembly, part of the 30S ribosomal subunit. Contacts protein S5. The interaction surface between S4 and S5 is involved in control of translational fidelity.

In terms of biological role, one of the primary rRNA binding proteins, it binds directly to 16S rRNA where it nucleates assembly of the body of the 30S subunit. Functionally, with S5 and S12 plays an important role in translational accuracy. The polypeptide is Small ribosomal subunit protein uS4 (Mycobacterium marinum (strain ATCC BAA-535 / M)).